The primary structure comprises 222 residues: Iodotyrosine deiodinase (222 aa).

FMN contacts are provided by residues 34-38 (RRTVR) and 61-62 (PS). 3-iodo-L-tyrosine contacts are provided by Glu-91, Tyr-95, and Lys-116. FMN contacts are provided by residues 171-173 (THT) and Arg-212.

The protein belongs to the nitroreductase family. Homodimer. FMN serves as cofactor.

The catalysed reaction is 2 iodide + L-tyrosine + 2 NADP(+) = 3,5-diiodo-L-tyrosine + 2 NADPH + H(+). It catalyses the reaction iodide + L-tyrosine + NADP(+) = 3-iodo-L-tyrosine + NADPH. It carries out the reaction 3-iodo-L-tyrosine + iodide + NADP(+) = 3,5-diiodo-L-tyrosine + NADPH + H(+). The enzyme catalyses L-tyrosine + chloride + NADP(+) = 3-chloro-L-tyrosine + NADPH. The catalysed reaction is bromide + L-tyrosine + NADP(+) = 3-bromo-L-tyrosine + NADPH. Functionally, catalyzes the dehalogenation of halotyrosines such as 3-iodo-L-tyrosine and 3,5-diiodo-L-tyrosine. Likely to also catalyze the dehalogenation of other halotyrosines such as 3-bromo-L-tyrosine, 3-chloro-L-tyrosine and 3-iodo-L-tyrosine. Activity towards 3-iodo-L-tyrosine is much stronger than activity towards 3,5-diiodo-L-tyrosine and 2-iodophenol. The chain is Iodotyrosine deiodinase from Haliscomenobacter hydrossis (strain ATCC 27775 / DSM 1100 / LMG 10767 / O).